The primary structure comprises 189 residues: Peptidyl-tRNA hydrolase (189 aa).

Residue Tyr-15 coordinates tRNA. Residue His-20 is the Proton acceptor of the active site. 3 residues coordinate tRNA: Phe-66, Asn-68, and Asn-114.

It belongs to the PTH family. As to quaternary structure, monomer.

The protein resides in the cytoplasm. The catalysed reaction is an N-acyl-L-alpha-aminoacyl-tRNA + H2O = an N-acyl-L-amino acid + a tRNA + H(+). In terms of biological role, hydrolyzes ribosome-free peptidyl-tRNAs (with 1 or more amino acids incorporated), which drop off the ribosome during protein synthesis, or as a result of ribosome stalling. Catalyzes the release of premature peptidyl moieties from peptidyl-tRNA molecules trapped in stalled 50S ribosomal subunits, and thus maintains levels of free tRNAs and 50S ribosomes. The protein is Peptidyl-tRNA hydrolase of Streptococcus equi subsp. zooepidemicus (strain MGCS10565).